We begin with the raw amino-acid sequence, 210 residues long: Large ribosomal subunit protein bL25 (210 aa).

The disordered stretch occupies residues 185 to 210; it reads APEPAGQPEVPPEPAEEAKAKTIEKE. Basic and acidic residues predominate over residues 200-210; it reads EEAKAKTIEKE.

Belongs to the bacterial ribosomal protein bL25 family. CTC subfamily. Part of the 50S ribosomal subunit; part of the 5S rRNA/L5/L18/L25 subcomplex. Contacts the 5S rRNA. Binds to the 5S rRNA independently of L5 and L18.

Its function is as follows. This is one of the proteins that binds to the 5S RNA in the ribosome where it forms part of the central protuberance. This chain is Large ribosomal subunit protein bL25, found in Desulforamulus reducens (strain ATCC BAA-1160 / DSM 100696 / MI-1) (Desulfotomaculum reducens).